A 157-amino-acid polypeptide reads, in one-letter code: UPF0225 protein PSPPH_1399 (157 aa).

Belongs to the UPF0225 family.

This Pseudomonas savastanoi pv. phaseolicola (strain 1448A / Race 6) (Pseudomonas syringae pv. phaseolicola (strain 1448A / Race 6)) protein is UPF0225 protein PSPPH_1399.